Here is a 257-residue protein sequence, read N- to C-terminus: Imidazole glycerol phosphate synthase subunit HisF (257 aa).

Catalysis depends on residues D12 and D131.

The protein belongs to the HisA/HisF family. Heterodimer of HisH and HisF.

The protein resides in the cytoplasm. It catalyses the reaction 5-[(5-phospho-1-deoxy-D-ribulos-1-ylimino)methylamino]-1-(5-phospho-beta-D-ribosyl)imidazole-4-carboxamide + L-glutamine = D-erythro-1-(imidazol-4-yl)glycerol 3-phosphate + 5-amino-1-(5-phospho-beta-D-ribosyl)imidazole-4-carboxamide + L-glutamate + H(+). The protein operates within amino-acid biosynthesis; L-histidine biosynthesis; L-histidine from 5-phospho-alpha-D-ribose 1-diphosphate: step 5/9. IGPS catalyzes the conversion of PRFAR and glutamine to IGP, AICAR and glutamate. The HisF subunit catalyzes the cyclization activity that produces IGP and AICAR from PRFAR using the ammonia provided by the HisH subunit. The sequence is that of Imidazole glycerol phosphate synthase subunit HisF from Paraburkholderia phytofirmans (strain DSM 17436 / LMG 22146 / PsJN) (Burkholderia phytofirmans).